The primary structure comprises 430 residues: Enolase (430 aa).

Q167 is a binding site for (2R)-2-phosphoglycerate. The Proton donor role is filled by E209. Mg(2+) contacts are provided by D246, E287, and D314. (2R)-2-phosphoglycerate is bound by residues K339, R368, S369, and K390. K339 serves as the catalytic Proton acceptor.

It belongs to the enolase family. Mg(2+) serves as cofactor.

It is found in the cytoplasm. It localises to the secreted. The protein localises to the cell surface. The catalysed reaction is (2R)-2-phosphoglycerate = phosphoenolpyruvate + H2O. It functions in the pathway carbohydrate degradation; glycolysis; pyruvate from D-glyceraldehyde 3-phosphate: step 4/5. Catalyzes the reversible conversion of 2-phosphoglycerate (2-PG) into phosphoenolpyruvate (PEP). It is essential for the degradation of carbohydrates via glycolysis. This is Enolase from Prochlorococcus marinus (strain MIT 9301).